Reading from the N-terminus, the 454-residue chain is Glycosyl hydrolase family 109 protein (454 aa).

Positions 1-29 (MFAMKRREFIAASAAVAASSLLPQTPAWA) form a signal peptide, tat-type signal. NAD(+) contacts are provided by residues 43–44 (MR), D65, 116–119 (WEYH), 136–137 (EV), and N165. A substrate-binding site is contributed by Y194. 224 to 228 (SEARW) contributes to the NAD(+) binding site. Substrate-binding positions include R229, 241–244 (YPSH), and Y324. Y241 serves as a coordination point for NAD(+).

This sequence belongs to the Gfo/Idh/MocA family. Glycosyl hydrolase 109 subfamily. Requires NAD(+) as cofactor. In terms of processing, predicted to be exported by the Tat system. The position of the signal peptide cleavage has not been experimentally proven.

Functionally, glycosidase. The sequence is that of Glycosyl hydrolase family 109 protein from Stenotrophomonas maltophilia (strain K279a).